Reading from the N-terminus, the 91-residue chain is Mercuric transport protein periplasmic component (91 aa).

The signal sequence occupies residues 1 to 19 (MKKLFASLALAAAVAPVWA). Residues 22-88 (QTVTLAVPGM…ATADAGYPSS (67 aa)) enclose the HMA domain. Cysteine 33 and cysteine 36 together coordinate Hg(2+).

This sequence belongs to the MerP family. In terms of assembly, monomer.

It is found in the periplasm. Functionally, involved in mercury resistance. Acts as a mercury scavenger that specifically binds to a mercuric ion in the periplasm and probably passes it to the cytoplasmic mercuric reductase MerA via the mercuric transport protein MerT. The protein is Mercuric transport protein periplasmic component of Shigella flexneri.